The sequence spans 436 residues: 3-ketoacyl-CoA thiolase (436 aa).

Cys-99 serves as the catalytic Acyl-thioester intermediate. Catalysis depends on proton acceptor residues His-392 and Cys-422.

This sequence belongs to the thiolase-like superfamily. Thiolase family. In terms of assembly, heterotetramer of two alpha chains (FadJ) and two beta chains (FadI).

The protein resides in the cytoplasm. The catalysed reaction is an acyl-CoA + acetyl-CoA = a 3-oxoacyl-CoA + CoA. The protein operates within lipid metabolism; fatty acid beta-oxidation. Its function is as follows. Catalyzes the final step of fatty acid oxidation in which acetyl-CoA is released and the CoA ester of a fatty acid two carbons shorter is formed. This chain is 3-ketoacyl-CoA thiolase, found in Photobacterium profundum (strain SS9).